A 463-amino-acid chain; its full sequence is Asparagine--tRNA ligase (463 aa).

It belongs to the class-II aminoacyl-tRNA synthetase family. In terms of assembly, homodimer.

The protein resides in the cytoplasm. It carries out the reaction tRNA(Asn) + L-asparagine + ATP = L-asparaginyl-tRNA(Asn) + AMP + diphosphate + H(+). The chain is Asparagine--tRNA ligase from Nostoc sp. (strain PCC 7120 / SAG 25.82 / UTEX 2576).